A 136-amino-acid chain; its full sequence is Ribosome-binding factor A (136 aa).

It belongs to the RbfA family. In terms of assembly, monomer. Binds 30S ribosomal subunits, but not 50S ribosomal subunits or 70S ribosomes.

It localises to the cytoplasm. Its function is as follows. One of several proteins that assist in the late maturation steps of the functional core of the 30S ribosomal subunit. Associates with free 30S ribosomal subunits (but not with 30S subunits that are part of 70S ribosomes or polysomes). Required for efficient processing of 16S rRNA. May interact with the 5'-terminal helix region of 16S rRNA. This Serratia proteamaculans (strain 568) protein is Ribosome-binding factor A.